A 76-amino-acid chain; its full sequence is U-actitoxin-Avd8c (76 aa).

The signal sequence occupies residues 1–16 (LVIVFVVLLGVPLISA). A propeptide spanning residues 17-33 (NEEELLAILQDQRNDAR) is cleaved from the precursor.

The protein belongs to the sea anemone 8 toxin family.

The protein resides in the secreted. It localises to the nematocyst. In Anemonia viridis (Snakelocks anemone), this protein is U-actitoxin-Avd8c.